The primary structure comprises 24 residues: Osteocalcin (24 aa).

One can recognise a Gla domain in the interval 1-24 (REVCELNPDCDELADHIGFQEAYR). Positions 2, 5, and 11 each coordinate Ca(2+). 4-carboxyglutamate occurs at positions 2 and 5. C4 and C10 are joined by a disulfide.

The protein belongs to the osteocalcin/matrix Gla protein family. Gamma-carboxyglutamate residues are formed by vitamin K dependent carboxylation by GGCX. These residues are essential for the binding of calcium. Decarboxylation promotes the hormone activity.

Its subcellular location is the secreted. Functionally, the carboxylated form is one of the main organic components of the bone matrix, which constitutes 1-2% of the total bone protein: it acts as a negative regulator of bone formation and is required to limit bone formation without impairing bone resorption or mineralization. The carboxylated form binds strongly to apatite and calcium. The uncarboxylated form acts as a hormone secreted by osteoblasts, which regulates different cellular processes, such as energy metabolism, male fertility and brain development. Regulates of energy metabolism by acting as a hormone favoring pancreatic beta-cell proliferation, insulin secretion and sensitivity and energy expenditure. Uncarboxylated osteocalcin hormone also promotes testosterone production in the testes: acts as a ligand for G protein-coupled receptor GPRC6A at the surface of Leydig cells, initiating a signaling response that promotes the expression of enzymes required for testosterone synthesis in a CREB-dependent manner. Also acts as a regulator of brain development: osteocalcin hormone crosses the blood-brain barrier and acts as a ligand for GPR158 on neurons, initiating a signaling response that prevents neuronal apoptosis in the hippocampus, favors the synthesis of all monoamine neurotransmitters and inhibits that of gamma-aminobutyric acid (GABA). Osteocalcin also crosses the placenta during pregnancy and maternal osteocalcin is required for fetal brain development. This is Osteocalcin from Homo sapiens neanderthalensis (Neanderthal).